Here is a 568-residue protein sequence, read N- to C-terminus: Zinc finger protein 648 (568 aa).

Residues 1-11 (MAQVDSQDRWG) show a composition bias toward basic and acidic residues. Residues 1–106 (MAQVDSQDRW…MSGKASWSRD (106 aa)) are disordered. 10 C2H2-type zinc fingers span residues 279 to 301 (YACE…RRLH), 307 to 329 (YQCS…IRTH), 335 to 358 (YPCP…RNMH), 364 to 386 (FPCS…QRTH), 392 to 414 (FRCP…QRVH), 420 to 442 (FPCP…QTLH), 448 to 470 (FKCA…QRIH), 476 to 498 (FPCT…QQIH), 504 to 526 (FLCA…IRMH), and 532 to 554 (YQCE…RAKH). Positions 548 to 568 (QRHRAKHGTCKKEPIPSSSDE) are disordered.

Belongs to the krueppel C2H2-type zinc-finger protein family.

It localises to the nucleus. Functionally, may be involved in transcriptional regulation. In Homo sapiens (Human), this protein is Zinc finger protein 648 (ZNF648).